A 249-amino-acid polypeptide reads, in one-letter code: Adapter protein MecA (249 aa).

This sequence belongs to the MecA family. In terms of assembly, homodimer.

Its function is as follows. Enables the recognition and targeting of unfolded and aggregated proteins to the ClpC protease or to other proteins involved in proteolysis. The protein is Adapter protein MecA of Streptococcus thermophilus (strain CNRZ 1066).